The chain runs to 204 residues: Thiamine-phosphate synthase (204 aa).

4-amino-2-methyl-5-(diphosphooxymethyl)pyrimidine contacts are provided by residues 28–32 (QLRIK) and Asn-60. The Mg(2+) site is built by Asp-61 and Asp-80. Ser-99 and Lys-128 together coordinate 4-amino-2-methyl-5-(diphosphooxymethyl)pyrimidine. Residues Gly-157 and 177-178 (VT) contribute to the 2-[(2R,5Z)-2-carboxy-4-methylthiazol-5(2H)-ylidene]ethyl phosphate site.

The protein belongs to the thiamine-phosphate synthase family. Requires Mg(2+) as cofactor.

The catalysed reaction is 2-[(2R,5Z)-2-carboxy-4-methylthiazol-5(2H)-ylidene]ethyl phosphate + 4-amino-2-methyl-5-(diphosphooxymethyl)pyrimidine + 2 H(+) = thiamine phosphate + CO2 + diphosphate. It carries out the reaction 2-(2-carboxy-4-methylthiazol-5-yl)ethyl phosphate + 4-amino-2-methyl-5-(diphosphooxymethyl)pyrimidine + 2 H(+) = thiamine phosphate + CO2 + diphosphate. The enzyme catalyses 4-methyl-5-(2-phosphooxyethyl)-thiazole + 4-amino-2-methyl-5-(diphosphooxymethyl)pyrimidine + H(+) = thiamine phosphate + diphosphate. Its pathway is cofactor biosynthesis; thiamine diphosphate biosynthesis; thiamine phosphate from 4-amino-2-methyl-5-diphosphomethylpyrimidine and 4-methyl-5-(2-phosphoethyl)-thiazole: step 1/1. Functionally, condenses 4-methyl-5-(beta-hydroxyethyl)thiazole monophosphate (THZ-P) and 2-methyl-4-amino-5-hydroxymethyl pyrimidine pyrophosphate (HMP-PP) to form thiamine monophosphate (TMP). This is Thiamine-phosphate synthase from Rhizobium etli (strain ATCC 51251 / DSM 11541 / JCM 21823 / NBRC 15573 / CFN 42).